A 124-amino-acid polypeptide reads, in one-letter code: uncharacterized protein (124 aa).

The tract at residues 1–65 (MAENSRYVRL…RPASSSNPDY (65 aa)) is disordered. Residues 37–47 (LNSNDAESQQV) are compositionally biased toward polar residues.

This is an uncharacterized protein from Microplitis demolitor (Parasitoid wasp).